Here is a 42-residue protein sequence, read N- to C-terminus: Photosystem I reaction center subunit IX (42 aa).

The chain crosses the membrane as a helical span at residues 7–27; that stretch reads YLSTAPVIATIWFGFLAGLLI.

The protein belongs to the PsaJ family.

Its subcellular location is the plastid. It localises to the chloroplast thylakoid membrane. Functionally, may help in the organization of the PsaE and PsaF subunits. In Chaetosphaeridium globosum (Charophycean green alga), this protein is Photosystem I reaction center subunit IX.